We begin with the raw amino-acid sequence, 87 residues long: Probable Fe(2+)-trafficking protein (87 aa).

Belongs to the Fe(2+)-trafficking protein family.

Could be a mediator in iron transactions between iron acquisition and iron-requiring processes, such as synthesis and/or repair of Fe-S clusters in biosynthetic enzymes. In Francisella tularensis subsp. holarctica (strain FTNF002-00 / FTA), this protein is Probable Fe(2+)-trafficking protein.